The sequence spans 95 residues: Large ribosomal subunit protein uL23cz/uL23cy (95 aa).

Belongs to the universal ribosomal protein uL23 family. In terms of assembly, part of the 50S ribosomal subunit.

Its subcellular location is the plastid. It is found in the chloroplast. Functionally, binds to 23S rRNA. The chain is Large ribosomal subunit protein uL23cz/uL23cy (rpl23-A) from Amborella trichopoda.